Reading from the N-terminus, the 1407-residue chain is DNA-directed RNA polymerase subunit beta' (1407 aa).

Cysteine 70, cysteine 72, cysteine 85, and cysteine 88 together coordinate Zn(2+). Residues aspartate 460, aspartate 462, and aspartate 464 each contribute to the Mg(2+) site. Residues cysteine 814, cysteine 888, cysteine 895, and cysteine 898 each coordinate Zn(2+).

This sequence belongs to the RNA polymerase beta' chain family. The RNAP catalytic core consists of 2 alpha, 1 beta, 1 beta' and 1 omega subunit. When a sigma factor is associated with the core the holoenzyme is formed, which can initiate transcription. Mg(2+) serves as cofactor. Requires Zn(2+) as cofactor.

It catalyses the reaction RNA(n) + a ribonucleoside 5'-triphosphate = RNA(n+1) + diphosphate. In terms of biological role, DNA-dependent RNA polymerase catalyzes the transcription of DNA into RNA using the four ribonucleoside triphosphates as substrates. The chain is DNA-directed RNA polymerase subunit beta' from Citrobacter koseri (strain ATCC BAA-895 / CDC 4225-83 / SGSC4696).